Here is a 135-residue protein sequence, read N- to C-terminus: Succinate dehydrogenase assembly factor 2, mitochondrial (135 aa).

This sequence belongs to the SDHAF2 family. As to quaternary structure, interacts with the flavoprotein subunit within the SDH catalytic dimer.

Its subcellular location is the mitochondrion matrix. Functionally, plays an essential role in the assembly of succinate dehydrogenase (SDH), an enzyme complex (also referred to as respiratory complex II) that is a component of both the tricarboxylic acid (TCA) cycle and the mitochondrial electron transport chain, and which couples the oxidation of succinate to fumarate with the reduction of ubiquinone (coenzyme Q) to ubiquinol. Required for flavinylation (covalent attachment of FAD) of the flavoprotein subunit of the SDH catalytic dimer. The protein is Succinate dehydrogenase assembly factor 2, mitochondrial of Meyerozyma guilliermondii (strain ATCC 6260 / CBS 566 / DSM 6381 / JCM 1539 / NBRC 10279 / NRRL Y-324) (Yeast).